We begin with the raw amino-acid sequence, 1260 residues long: uncharacterized protein (1260 aa).

Its subcellular location is the plastid. It localises to the chloroplast. This is an uncharacterized protein from Ostreococcus tauri.